A 202-amino-acid chain; its full sequence is Imidazoleglycerol-phosphate dehydratase (202 aa).

Belongs to the imidazoleglycerol-phosphate dehydratase family.

Its subcellular location is the cytoplasm. The catalysed reaction is D-erythro-1-(imidazol-4-yl)glycerol 3-phosphate = 3-(imidazol-4-yl)-2-oxopropyl phosphate + H2O. Its pathway is amino-acid biosynthesis; L-histidine biosynthesis; L-histidine from 5-phospho-alpha-D-ribose 1-diphosphate: step 6/9. This Acinetobacter baylyi (strain ATCC 33305 / BD413 / ADP1) protein is Imidazoleglycerol-phosphate dehydratase.